A 213-amino-acid polypeptide reads, in one-letter code: Glycerol-3-phosphate acyltransferase (213 aa).

6 helical membrane-spanning segments follow: residues 3–23, 55–75, 80–100, 110–130, 142–162, and 163–183; these read ILLL…LWIG, ITFL…IWLG, SPLI…FTGF, AGVL…VFAL, SITA…IHFL, and LDGY…VIIF.

This sequence belongs to the PlsY family. Probably interacts with PlsX.

It localises to the cell membrane. The enzyme catalyses an acyl phosphate + sn-glycerol 3-phosphate = a 1-acyl-sn-glycero-3-phosphate + phosphate. Its pathway is lipid metabolism; phospholipid metabolism. Functionally, catalyzes the transfer of an acyl group from acyl-phosphate (acyl-PO(4)) to glycerol-3-phosphate (G3P) to form lysophosphatidic acid (LPA). This enzyme utilizes acyl-phosphate as fatty acyl donor, but not acyl-CoA or acyl-ACP. This chain is Glycerol-3-phosphate acyltransferase, found in Streptococcus thermophilus (strain CNRZ 1066).